We begin with the raw amino-acid sequence, 378 residues long: Chaperone protein DnaJ (378 aa).

In terms of domain architecture, J spans 5–70 (DYYEVLGVGR…NKKAAYDQFG (66 aa)). Residues 134 to 212 (GLTKELRIPT…CHGDGRVEKT (79 aa)) form a CR-type zinc finger. Positions 147, 150, 164, 167, 186, 189, 200, and 203 each coordinate Zn(2+). 4 CXXCXGXG motif repeats span residues 147-154 (CDVCDGSG), 164-171 (CTTCHGQG), 186-193 (CPTCHGRG), and 200-207 (CAKCHGDG).

Belongs to the DnaJ family. Homodimer. Zn(2+) is required as a cofactor.

The protein localises to the cytoplasm. Participates actively in the response to hyperosmotic and heat shock by preventing the aggregation of stress-denatured proteins and by disaggregating proteins, also in an autonomous, DnaK-independent fashion. Unfolded proteins bind initially to DnaJ; upon interaction with the DnaJ-bound protein, DnaK hydrolyzes its bound ATP, resulting in the formation of a stable complex. GrpE releases ADP from DnaK; ATP binding to DnaK triggers the release of the substrate protein, thus completing the reaction cycle. Several rounds of ATP-dependent interactions between DnaJ, DnaK and GrpE are required for fully efficient folding. Also involved, together with DnaK and GrpE, in the DNA replication of plasmids through activation of initiation proteins. This is Chaperone protein DnaJ from Shewanella oneidensis (strain ATCC 700550 / JCM 31522 / CIP 106686 / LMG 19005 / NCIMB 14063 / MR-1).